The chain runs to 222 residues: MKRDGGRLLPRERMIKAGPESLSVEELVAIVLRTGKKGKHVLELSKDLLERFDGSLIKLSNASLEEIASVEGVGMVKAITLKAALELGKRLHRELERIPEKLDSSVKVYKYCQEMVYLEREIVKVICLDTKLNVIGENTLTVGTSDRSLIHPRDVFRTAIRANASGVIVVHNHPSGDPTPSKEDRLITERLKQAGEILGVSLVDHVIVSRRGYFSFREEGEL.

The MPN domain maps to Lys101–Leu222. Zn(2+)-binding residues include His171, His173, and Asp184. Positions His171–Asp184 match the JAMM motif motif.

It belongs to the UPF0758 family.

In Thermotoga maritima (strain ATCC 43589 / DSM 3109 / JCM 10099 / NBRC 100826 / MSB8), this protein is UPF0758 protein TM_1557.